The sequence spans 180 residues: Crossover junction endodeoxyribonuclease RuvC (180 aa).

Active-site residues include aspartate 7, glutamate 66, and aspartate 138. Mg(2+) is bound by residues aspartate 7, glutamate 66, and aspartate 138.

This sequence belongs to the RuvC family. In terms of assembly, homodimer which binds Holliday junction (HJ) DNA. The HJ becomes 2-fold symmetrical on binding to RuvC with unstacked arms; it has a different conformation from HJ DNA in complex with RuvA. In the full resolvosome a probable DNA-RuvA(4)-RuvB(12)-RuvC(2) complex forms which resolves the HJ. The cofactor is Mg(2+).

It localises to the cytoplasm. The catalysed reaction is Endonucleolytic cleavage at a junction such as a reciprocal single-stranded crossover between two homologous DNA duplexes (Holliday junction).. The RuvA-RuvB-RuvC complex processes Holliday junction (HJ) DNA during genetic recombination and DNA repair. Endonuclease that resolves HJ intermediates. Cleaves cruciform DNA by making single-stranded nicks across the HJ at symmetrical positions within the homologous arms, yielding a 5'-phosphate and a 3'-hydroxyl group; requires a central core of homology in the junction. The consensus cleavage sequence is 5'-(A/T)TT(C/G)-3'. Cleavage occurs on the 3'-side of the TT dinucleotide at the point of strand exchange. HJ branch migration catalyzed by RuvA-RuvB allows RuvC to scan DNA until it finds its consensus sequence, where it cleaves and resolves the cruciform DNA. The sequence is that of Crossover junction endodeoxyribonuclease RuvC from Burkholderia multivorans (strain ATCC 17616 / 249).